Reading from the N-terminus, the 179-residue chain is Lebocin-4 (179 aa).

A signal peptide spans 1 to 16 (MYKFLVFSSVLVLFFA). Residues 17-120 (QASCQRFIQP…RPIESHRNTR (104 aa)) constitute a propeptide that is removed on maturation. An O-linked (GalNAc...) threonine glycan is attached at Thr135. Residues 153-179 (RRHASDDQEELRHHNEHFLIPRDILQD) constitute a propeptide that is removed on maturation.

The protein belongs to the lebocin family. In terms of processing, O-glycosylation is important for the antibacterial activity of lebocin. Hemolymph. Produced in fat body.

It is found in the secreted. Its function is as follows. Antibacterial peptide. The protein is Lebocin-4 (LEB4) of Bombyx mori (Silk moth).